The primary structure comprises 652 residues: Trypanothione synthetase (652 aa).

Residues 34–174 form the Peptidase C51 domain; that stretch reads SNKHDHFFSG…QHKDGVWTII (141 aa). Position 328 to 330 (328 to 330) interacts with ATP; the sequence is RFD. Mg(2+) is bound by residues Asp-330, Glu-344, and Asn-346. ATP contacts are provided by residues Lys-513, Lys-548, Gly-555, Gln-583, and 618-620; that span reads IIT.

The protein in the C-terminal section; belongs to the glutathionylspermidine synthase preATP-grasp family. It depends on Mg(2+) as a cofactor. Post-translationally, the N-terminus is blocked.

The catalysed reaction is spermidine + glutathione + ATP = glutathionylspermidine + ADP + phosphate + H(+). It catalyses the reaction glutathionylspermidine + glutathione + ATP = trypanothione + ADP + phosphate + H(+). In terms of biological role, conjugates glutathione (gamma-Glu-Cys-Gly) and glutathionylspermidine to form trypanothione (N(1),N(8)-bis(glutathionyl)spermidine), which is involved in maintaining intracellular thiol redox and in defense against oxidants. This Crithidia fasciculata protein is Trypanothione synthetase (TRS).